The primary structure comprises 93 residues: Ribonuclease P protein component 1 (93 aa).

It belongs to the eukaryotic/archaeal RNase P protein component 1 family. In terms of assembly, consists of a catalytic RNA component and at least 4-5 protein subunits.

It is found in the cytoplasm. It carries out the reaction Endonucleolytic cleavage of RNA, removing 5'-extranucleotides from tRNA precursor.. Functionally, part of ribonuclease P, a protein complex that generates mature tRNA molecules by cleaving their 5'-ends. The sequence is that of Ribonuclease P protein component 1 from Methanosphaera stadtmanae (strain ATCC 43021 / DSM 3091 / JCM 11832 / MCB-3).